Here is a 407-residue protein sequence, read N- to C-terminus: MYTAKEVILSQIKPALGCTEPAAIALNGAYLKEYVKNAKKIQLTINTNLMKNAMYVPIPNTGKKFGVKLAFALGYLCGDKTKGLNVFENIDKKCIEEAEKYINKIELDIVEGREIYIKSEAEGCEVITKKFHDYISSIKTSEKVITFESKNIDNNISDTEKWLKKISFDTLYRLIEKEKDFDFVKNAVDVNFELSKIGLNSDCGLNIGKSYKGDDIFSKIVSITVSASDARMEGVNYPAMSLVGSGNHGISAILPVWVYGKEKNFQENEIFKAVALSMLITIYIKLFIGRLSAICGAAFASGCGVAGGIAYLESNNKEVSKKAVSYVIQDINGVICDGAKMACSLKVRLGAKSGYEAAMFALEGKPVFSDGILENDITKSIQNLSRVSEAMYNVDGSIVEIMKNKII.

The protein belongs to the UPF0597 family.

The sequence is that of UPF0597 protein NAMH_0191 from Nautilia profundicola (strain ATCC BAA-1463 / DSM 18972 / AmH).